The sequence spans 364 residues: tRNA 2-selenouridine synthase (364 aa).

Positions 14-137 constitute a Rhodanese domain; that stretch reads LLADTPLIDV…LRQTAIQATW (124 aa). Catalysis depends on C97, which acts as the S-selanylcysteine intermediate.

The protein belongs to the SelU family. In terms of assembly, monomer.

It catalyses the reaction 5-methylaminomethyl-2-thiouridine(34) in tRNA + selenophosphate + (2E)-geranyl diphosphate + H2O + H(+) = 5-methylaminomethyl-2-selenouridine(34) in tRNA + (2E)-thiogeraniol + phosphate + diphosphate. The enzyme catalyses 5-methylaminomethyl-2-thiouridine(34) in tRNA + (2E)-geranyl diphosphate = 5-methylaminomethyl-S-(2E)-geranyl-thiouridine(34) in tRNA + diphosphate. It carries out the reaction 5-methylaminomethyl-S-(2E)-geranyl-thiouridine(34) in tRNA + selenophosphate + H(+) = 5-methylaminomethyl-2-(Se-phospho)selenouridine(34) in tRNA + (2E)-thiogeraniol. The catalysed reaction is 5-methylaminomethyl-2-(Se-phospho)selenouridine(34) in tRNA + H2O = 5-methylaminomethyl-2-selenouridine(34) in tRNA + phosphate. Its function is as follows. Involved in the post-transcriptional modification of the uridine at the wobble position (U34) of tRNA(Lys), tRNA(Glu) and tRNA(Gln). Catalyzes the conversion of 2-thiouridine (S2U-RNA) to 2-selenouridine (Se2U-RNA). Acts in a two-step process involving geranylation of 2-thiouridine (S2U) to S-geranyl-2-thiouridine (geS2U) and subsequent selenation of the latter derivative to 2-selenouridine (Se2U) in the tRNA chain. This chain is tRNA 2-selenouridine synthase, found in Salmonella choleraesuis (strain SC-B67).